The following is a 176-amino-acid chain: Large ribosomal subunit protein uL15 (176 aa).

Residues 1-13 (MKLNDLRDNEGAR) are compositionally biased toward basic and acidic residues. 2 disordered regions span residues 1–48 (MKLN…AIKG) and 151–176 (IPAA…AKAE). Residues 21–35 (RGIGSGKGKTGGRGQ) are compositionally biased toward gly residues. A compositionally biased stretch (basic and acidic residues) spans 156–176 (PEHEKKAARSEANKKAKAKAE).

The protein belongs to the universal ribosomal protein uL15 family. Part of the 50S ribosomal subunit.

In terms of biological role, binds to the 23S rRNA. In Erythrobacter litoralis (strain HTCC2594), this protein is Large ribosomal subunit protein uL15.